Consider the following 223-residue polypeptide: Ribose-5-phosphate isomerase A (223 aa).

Substrate-binding positions include 26–29 (TGST), 82–85 (DGAD), and 95–98 (KGGG). Glutamate 104 (proton acceptor) is an active-site residue. Lysine 122 contributes to the substrate binding site.

The protein belongs to the ribose 5-phosphate isomerase family. In terms of assembly, homodimer.

It catalyses the reaction aldehydo-D-ribose 5-phosphate = D-ribulose 5-phosphate. Its pathway is carbohydrate degradation; pentose phosphate pathway; D-ribose 5-phosphate from D-ribulose 5-phosphate (non-oxidative stage): step 1/1. In terms of biological role, catalyzes the reversible conversion of ribose-5-phosphate to ribulose 5-phosphate. The sequence is that of Ribose-5-phosphate isomerase A from Streptococcus agalactiae serotype V (strain ATCC BAA-611 / 2603 V/R).